Reading from the N-terminus, the 435-residue chain is uncharacterized protein (435 aa).

The next 9 membrane-spanning stretches (helical) occupy residues L40–F60, V103–L123, I133–P153, L195–L215, I226–G246, V313–V333, L358–W378, W381–P401, and V414–G434.

It is found in the cell membrane. This is an uncharacterized protein from Mycobacterium bovis (strain ATCC BAA-935 / AF2122/97).